A 324-amino-acid polypeptide reads, in one-letter code: MSNLQLDQNGQLRHFLSIQGLNRELLTRILDTAESFSTIGAQHVKKVPLLRGKTIVNLFFENSTRTLSTFELAAKRLSADVMNLNVRTSSTQKGESLLDTLRSLEAMHCDMFVVRHSDSGAAYFIARHVPSHVSVINAGDGCHSHPSQAMLDMLTIRRHKGSFPNLRVAIVGDILHSRVARSEIHALATLGTGEIRVIAPRTLLPRNVESLGVHIFHDMRAGLKGVDVVITLRLQRERMEGARLPSEREYFQLYGLTEEKLALARPEAIVMHPGPINRGIEIESAVADGPHSVILEQVSHGIAIRMAVMAMTMQIPVPEAKEAR.

2 residues coordinate carbamoyl phosphate: arginine 65 and threonine 66. Position 93 (lysine 93) interacts with L-aspartate. 3 residues coordinate carbamoyl phosphate: arginine 115, histidine 145, and glutamine 148. 2 residues coordinate L-aspartate: arginine 178 and arginine 233. The carbamoyl phosphate site is built by glycine 274 and proline 275.

This sequence belongs to the aspartate/ornithine carbamoyltransferase superfamily. ATCase family. As to quaternary structure, heterododecamer (2C3:3R2) of six catalytic PyrB chains organized as two trimers (C3), and six regulatory PyrI chains organized as three dimers (R2).

The enzyme catalyses carbamoyl phosphate + L-aspartate = N-carbamoyl-L-aspartate + phosphate + H(+). It participates in pyrimidine metabolism; UMP biosynthesis via de novo pathway; (S)-dihydroorotate from bicarbonate: step 2/3. Catalyzes the condensation of carbamoyl phosphate and aspartate to form carbamoyl aspartate and inorganic phosphate, the committed step in the de novo pyrimidine nucleotide biosynthesis pathway. This chain is Aspartate carbamoyltransferase catalytic subunit, found in Nitrosococcus oceani (strain ATCC 19707 / BCRC 17464 / JCM 30415 / NCIMB 11848 / C-107).